A 441-amino-acid polypeptide reads, in one-letter code: UBX domain-containing protein 6 (441 aa).

Positions 1-10 are mediates interaction with LMAN1; the sequence is MKKFFQEFKA. K2 bears the N-acetylalanine mark. 2 disordered regions span residues 13–79 and 87–106; these read KFKS…QDTI and LQAEATVSGSPEAPGTNVVS. Over residues 22 to 36 the composition is skewed to basic and acidic residues; it reads KLKESVGEKAHKEKP. The VCP/p97-interacting motif (VIM) stretch occupies residues 51 to 63; that stretch reads EAQMAAAAALARL. The span at 52-61 shows a compositional bias: low complexity; the sequence is AQMAAAAALA. S96 carries the phosphoserine modification. The PUB domain maps to 175-244; that stretch reads VDTIAKYLDN…DPEEFYVLSE (70 aa). Residues 332–408 form the UBX domain; the sequence is RKYNYTLLRV…GLVPSALLTF (77 aa).

Interacts with VCP through the PUB domain (via C-terminus) and VIM motif (via N-terminus); the interaction is direct. Forms a ternary complex with CAV1 and VCP. Interacts with SYVN1. Interacts with HERPUD1. Interacts with VCPKMT. May interact with DERL1. Interacts with PLAA, VCP and YOD1; may form a complex involved in macroautophagy. Interacts with LMAN1. In terms of tissue distribution, enhanced expression in testis.

It is found in the cytoplasm. Its subcellular location is the cytosol. The protein resides in the membrane. The protein localises to the nucleus. It localises to the cytoskeleton. It is found in the microtubule organizing center. Its subcellular location is the centrosome. The protein resides in the early endosome membrane. The protein localises to the late endosome membrane. It localises to the lysosome membrane. Its function is as follows. May negatively regulate the ATPase activity of VCP, an ATP-driven segregase that associates with different cofactors to control a wide variety of cellular processes. As a cofactor of VCP, it may play a role in the transport of CAV1 to lysosomes for degradation. It may also play a role in endoplasmic reticulum-associated degradation (ERAD) of misfolded proteins. Together with VCP and other cofactors, it may play a role in macroautophagy, regulating for instance the clearance of damaged lysosomes. This chain is UBX domain-containing protein 6, found in Homo sapiens (Human).